Consider the following 546-residue polypeptide: Metal transporter Nramp6.2 (546 aa).

8 consecutive transmembrane segments (helical) span residues 50–70 (FLPYVGPGFLVSLAYLDPGNL), 83–103 (ELLWVILIGLIFALIIQSLAA), 128–150 (SLWLLAEVAVIAADIPEVIGTAF), 154–176 (ILFHIPVWAGVLMTGLSTLLLLG), 187–207 (LLISALVFTMAACFFGELSYV), 233–253 (IALLGALVMPHNLFLHSALVL), 270–290 (YFLIESGFALFVAFLINVSII), and 333–353 (IYAIALLASGQSSTITGTYAG). N371 is a glycosylation site (N-linked (GlcNAc...) asparagine). 4 helical membrane-spanning segments follow: residues 374-394 (TRCIAILPSLFVSIIGGSSGA), 397-417 (LIIIASMILSFELPFALIPLL), 433-453 (IYIIVISWTLGFMIIGINVYY), and 473-493 (VIIGIIVFPLMAIYILAIIYL).

This sequence belongs to the NRAMP (TC 2.A.55) family.

The protein localises to the membrane. Probable divalent metal transporter. The sequence is that of Metal transporter Nramp6.2 from Populus trichocarpa (Western balsam poplar).